Reading from the N-terminus, the 200-residue chain is Mpv17-like protein 2 (200 aa).

The next 3 helical transmembrane spans lie at 24–40 (ALLLTNTLGCGVLMAAG), 63–83 (ASMFAVGCSMGPFLHFWYLWL), and 102–122 (VLVDQTVASPILGVWYFLGLG).

Belongs to the peroxisomal membrane protein PXMP2/4 family. Interacts with the large mitochondrial ribosomal subunit.

The protein localises to the membrane. It is found in the mitochondrion inner membrane. Functionally, required for the assembly and stability of the mitochondrial ribosome. Is a positive regulator of mitochondrial protein synthesis. In Mus musculus (Mouse), this protein is Mpv17-like protein 2 (Mpv17l2).